The following is a 341-amino-acid chain: tRNA N6-adenosine threonylcarbamoyltransferase (341 aa).

Residues His-111 and His-115 each contribute to the Fe cation site. Substrate is bound by residues 134–138 (LVSGG), Asp-167, Gly-180, and Asn-276. Asp-304 is a binding site for Fe cation.

This sequence belongs to the KAE1 / TsaD family. Requires Fe(2+) as cofactor.

It is found in the cytoplasm. It carries out the reaction L-threonylcarbamoyladenylate + adenosine(37) in tRNA = N(6)-L-threonylcarbamoyladenosine(37) in tRNA + AMP + H(+). Functionally, required for the formation of a threonylcarbamoyl group on adenosine at position 37 (t(6)A37) in tRNAs that read codons beginning with adenine. Is involved in the transfer of the threonylcarbamoyl moiety of threonylcarbamoyl-AMP (TC-AMP) to the N6 group of A37, together with TsaE and TsaB. TsaD likely plays a direct catalytic role in this reaction. The sequence is that of tRNA N6-adenosine threonylcarbamoyltransferase from Pseudomonas entomophila (strain L48).